The following is a 140-amino-acid chain: Putative pre-16S rRNA nuclease (140 aa).

It belongs to the YqgF nuclease family.

It localises to the cytoplasm. Functionally, could be a nuclease involved in processing of the 5'-end of pre-16S rRNA. In Enterococcus faecalis (strain ATCC 700802 / V583), this protein is Putative pre-16S rRNA nuclease.